A 379-amino-acid polypeptide reads, in one-letter code: Chaperone protein DnaJ (379 aa).

The J domain occupies 7–72 (CYYETLEVER…DKRAAYDRYG (66 aa)). The CR-type zinc-finger motif lies at 135–213 (GKTAQIEIPV…CTGSGRVTKE (79 aa)). Zn(2+) contacts are provided by C148, C151, C165, C168, C187, C190, C201, and C204. 4 CXXCXGXG motif repeats span residues 148 to 155 (CEACSGTG), 165 to 172 (CSTCGGAG), 187 to 194 (CPSCQGRG), and 201 to 208 (CPSCTGSG).

The protein belongs to the DnaJ family. As to quaternary structure, homodimer. Zn(2+) is required as a cofactor.

The protein localises to the cytoplasm. Its function is as follows. Participates actively in the response to hyperosmotic and heat shock by preventing the aggregation of stress-denatured proteins and by disaggregating proteins, also in an autonomous, DnaK-independent fashion. Unfolded proteins bind initially to DnaJ; upon interaction with the DnaJ-bound protein, DnaK hydrolyzes its bound ATP, resulting in the formation of a stable complex. GrpE releases ADP from DnaK; ATP binding to DnaK triggers the release of the substrate protein, thus completing the reaction cycle. Several rounds of ATP-dependent interactions between DnaJ, DnaK and GrpE are required for fully efficient folding. Also involved, together with DnaK and GrpE, in the DNA replication of plasmids through activation of initiation proteins. This is Chaperone protein DnaJ from Rhodopseudomonas palustris (strain ATCC BAA-98 / CGA009).